The chain runs to 344 residues: Pyruvate dehydrogenase E1 component subunit alpha (344 aa).

Pyruvate contacts are provided by His-55, Tyr-81, Arg-82, Ala-130, Ile-132, Asp-168, Gly-169, and Asn-197. Thiamine diphosphate-binding residues include Tyr-81, Arg-82, Ala-130, Ile-132, Asp-168, Gly-169, Asn-197, and His-266. Asp-168 is a Mg(2+) binding site. Residue Asn-197 coordinates Mg(2+).

Heterodimer of an alpha and a beta chain. Thiamine diphosphate serves as cofactor. It depends on Mg(2+) as a cofactor.

It localises to the plastid. Its subcellular location is the chloroplast. It carries out the reaction N(6)-[(R)-lipoyl]-L-lysyl-[protein] + pyruvate + H(+) = N(6)-[(R)-S(8)-acetyldihydrolipoyl]-L-lysyl-[protein] + CO2. Functionally, the pyruvate dehydrogenase complex catalyzes the overall conversion of pyruvate to acetyl-CoA and CO(2). It contains multiple copies of three enzymatic components: pyruvate dehydrogenase (E1), dihydrolipoamide acetyltransferase (E2) and lipoamide dehydrogenase (E3). This chain is Pyruvate dehydrogenase E1 component subunit alpha (pdhA), found in Porphyra purpurea (Red seaweed).